The following is a 139-amino-acid chain: Phosphoribosyl-AMP cyclohydrolase (139 aa).

Residue Asp91 participates in Mg(2+) binding. Cys92 provides a ligand contact to Zn(2+). Residues Asp93 and Asp95 each coordinate Mg(2+). Zn(2+)-binding residues include Cys110 and Cys117.

The protein belongs to the PRA-CH family. As to quaternary structure, homodimer. It depends on Mg(2+) as a cofactor. Zn(2+) is required as a cofactor.

Its subcellular location is the cytoplasm. The enzyme catalyses 1-(5-phospho-beta-D-ribosyl)-5'-AMP + H2O = 1-(5-phospho-beta-D-ribosyl)-5-[(5-phospho-beta-D-ribosylamino)methylideneamino]imidazole-4-carboxamide. It participates in amino-acid biosynthesis; L-histidine biosynthesis; L-histidine from 5-phospho-alpha-D-ribose 1-diphosphate: step 3/9. Catalyzes the hydrolysis of the adenine ring of phosphoribosyl-AMP. The chain is Phosphoribosyl-AMP cyclohydrolase from Brucella canis (strain ATCC 23365 / NCTC 10854 / RM-666).